The chain runs to 913 residues: Ubiquitin carboxyl-terminal hydrolase 20 (913 aa).

A UBP-type zinc finger spans residues 6-111 (DLCPHLDSIG…GSSKFSEQDS (106 aa)). The Zn(2+) site is built by Cys-8, His-10, Cys-30, Cys-33, Cys-43, Cys-48, Cys-53, His-60, His-64, His-70, Cys-83, and Cys-86. Residues Ser-111, Ser-131, and Ser-133 each carry the phosphoserine modification. The region spanning 144-684 (TGMKNLGNSC…EGYVLFYRKS (541 aa)) is the USP domain. The active-site Nucleophile is Cys-153. The disordered stretch occupies residues 256-414 (LTEARDSDSS…SSSPPRASPV (159 aa)). Thr-257 bears the Phosphothreonine mark. Residues 258 to 278 (EARDSDSSDTDEKREGDRSPS) show a composition bias toward basic and acidic residues. Phosphoserine is present on Ser-304. A compositionally biased stretch (basic and acidic residues) spans 315 to 331 (EASRAISEKERMKDRKF). A Phosphoserine modification is found at Ser-367. Phosphothreonine is present on Thr-376. A phosphoserine mark is found at Ser-407 and Ser-412. His-642 acts as the Proton acceptor in catalysis. DUSP domains lie at 686 to 779 (EEAV…LYVC) and 788 to 891 (ALAK…RQSV).

Belongs to the peptidase C19 family. USP20/USP33 subfamily. Interacts with VHL, leading to its ubiquitination and subsequent degradation. Interacts with CCP110. Interacts with DIO2. Interacts with HIF1A. Interacts with ADRB2. Interacts with USP18. In terms of processing, ubiquitinated via a VHL-dependent pathway for proteasomal degradation.

It is found in the cytoplasm. Its subcellular location is the endoplasmic reticulum. The protein resides in the perinuclear region. It localises to the cytoskeleton. The protein localises to the microtubule organizing center. It is found in the centrosome. It catalyses the reaction Thiol-dependent hydrolysis of ester, thioester, amide, peptide and isopeptide bonds formed by the C-terminal Gly of ubiquitin (a 76-residue protein attached to proteins as an intracellular targeting signal).. In terms of biological role, deubiquitinating enzyme that plays a role in many cellular processes including autophagy, cellular antiviral response or membrane protein biogenesis. Attenuates TLR4-mediated NF-kappa-B signaling by cooperating with beta-arrestin-2/ARRB2 and inhibiting TRAF6 autoubiquitination. Promotes cellular antiviral responses by deconjugating 'Lys-33' and 'Lys-48'-linked ubiquitination of STING1 leading to its stabilization. Plays an essential role in autophagy induction by regulating the ULK1 stability through deubiquitination of ULK1. Acts as a positive regulator for NF-kappa-B activation by TNF-alpha through deubiquitinating 'Lys-48'-linked polyubiquitination of SQSTM1, leading to its increased stability. Acts as a regulator of G-protein coupled receptor (GPCR) signaling by mediating the deubiquitination beta-2 adrenergic receptor (ADRB2). Plays a central role in ADRB2 recycling and resensitization after prolonged agonist stimulation by constitutively binding ADRB2, mediating deubiquitination of ADRB2 and inhibiting lysosomal trafficking of ADRB2. Upon dissociation, it is probably transferred to the translocated beta-arrestins, possibly leading to beta-arrestins deubiquitination and disengagement from ADRB2. This suggests the existence of a dynamic exchange between the ADRB2 and beta-arrestins. Deubiquitinates DIO2, thereby regulating thyroid hormone regulation. Deubiquitinates HIF1A, leading to stabilize HIF1A and enhance HIF1A-mediated activity. Deubiquitinates MCL1, a pivotal member of the anti-apoptotic Bcl-2 protein family to regulate its stability. Within the endoplasmic reticulum, participates with USP33 in the rescue of post-translationally targeted membrane proteins that are inappropriately ubiquitinated by the cytosolic protein quality control in the cytosol. This is Ubiquitin carboxyl-terminal hydrolase 20 (USP20) from Pongo abelii (Sumatran orangutan).